The primary structure comprises 157 residues: Transcription elongation factor GreA (157 aa).

Residues 12–74 adopt a coiled-coil conformation; it reads LKKLEEELEY…TLEAMLKNAK (63 aa).

Belongs to the GreA/GreB family.

Functionally, necessary for efficient RNA polymerase transcription elongation past template-encoded arresting sites. The arresting sites in DNA have the property of trapping a certain fraction of elongating RNA polymerases that pass through, resulting in locked ternary complexes. Cleavage of the nascent transcript by cleavage factors such as GreA or GreB allows the resumption of elongation from the new 3'terminus. GreA releases sequences of 2 to 3 nucleotides. The chain is Transcription elongation factor GreA from Caldanaerobacter subterraneus subsp. tengcongensis (strain DSM 15242 / JCM 11007 / NBRC 100824 / MB4) (Thermoanaerobacter tengcongensis).